The following is a 358-amino-acid chain: Alanine racemase (358 aa).

Lysine 35 functions as the Proton acceptor; specific for D-alanine in the catalytic mechanism. N6-(pyridoxal phosphate)lysine is present on lysine 35. Arginine 130 lines the substrate pocket. Catalysis depends on tyrosine 255, which acts as the Proton acceptor; specific for L-alanine. Methionine 303 provides a ligand contact to substrate.

Belongs to the alanine racemase family. It depends on pyridoxal 5'-phosphate as a cofactor.

The enzyme catalyses L-alanine = D-alanine. Its pathway is amino-acid biosynthesis; D-alanine biosynthesis; D-alanine from L-alanine: step 1/1. Functionally, catalyzes the interconversion of L-alanine and D-alanine. May also act on other amino acids. This is Alanine racemase (alr) from Shewanella piezotolerans (strain WP3 / JCM 13877).